A 620-amino-acid polypeptide reads, in one-letter code: 1-deoxy-D-xylulose-5-phosphate synthase (620 aa).

Thiamine diphosphate contacts are provided by residues histidine 80 and 121 to 123; that span reads GHS. Aspartate 152 serves as a coordination point for Mg(2+). Thiamine diphosphate is bound by residues 153 to 154, asparagine 181, tyrosine 288, and glutamate 370; that span reads GA. Asparagine 181 contacts Mg(2+).

The protein belongs to the transketolase family. DXPS subfamily. In terms of assembly, homodimer. Requires Mg(2+) as cofactor. Thiamine diphosphate serves as cofactor.

The catalysed reaction is D-glyceraldehyde 3-phosphate + pyruvate + H(+) = 1-deoxy-D-xylulose 5-phosphate + CO2. It functions in the pathway metabolic intermediate biosynthesis; 1-deoxy-D-xylulose 5-phosphate biosynthesis; 1-deoxy-D-xylulose 5-phosphate from D-glyceraldehyde 3-phosphate and pyruvate: step 1/1. In terms of biological role, catalyzes the acyloin condensation reaction between C atoms 2 and 3 of pyruvate and glyceraldehyde 3-phosphate to yield 1-deoxy-D-xylulose-5-phosphate (DXP). This is 1-deoxy-D-xylulose-5-phosphate synthase from Salmonella choleraesuis (strain SC-B67).